The chain runs to 171 residues: PRA1-like protein (171 aa).

The next 3 helical transmembrane spans lie at alanine 67 to isoleucine 87, valine 119 to isoleucine 139, and tryptophan 140 to valine 160.

Belongs to the PRA1 family.

The protein localises to the membrane. This chain is PRA1-like protein, found in Schizosaccharomyces pombe (strain 972 / ATCC 24843) (Fission yeast).